The sequence spans 444 residues: Proline--tRNA ligase (444 aa).

This sequence belongs to the class-II aminoacyl-tRNA synthetase family. ProS type 2 subfamily. As to quaternary structure, homodimer.

It localises to the cytoplasm. It carries out the reaction tRNA(Pro) + L-proline + ATP = L-prolyl-tRNA(Pro) + AMP + diphosphate. Its function is as follows. Catalyzes the attachment of proline to tRNA(Pro) in a two-step reaction: proline is first activated by ATP to form Pro-AMP and then transferred to the acceptor end of tRNA(Pro). This is Proline--tRNA ligase from Pelagibacter ubique (strain HTCC1062).